The primary structure comprises 474 residues: tRNA-2-methylthio-N(6)-dimethylallyladenosine synthase (474 aa).

The MTTase N-terminal domain maps to 3 to 120 (KKLHIKTWGC…LPEMINSVRG (118 aa)). Residues C12, C49, C83, C157, C161, and C164 each coordinate [4Fe-4S] cluster. In terms of domain architecture, Radical SAM core spans 143–375 (RAEGPTAFVS…QERINQQAMA (233 aa)). A TRAM domain is found at 378-441 (RRMLGSTQRI…PNSLRGKVVR (64 aa)).

It belongs to the methylthiotransferase family. MiaB subfamily. As to quaternary structure, monomer. The cofactor is [4Fe-4S] cluster.

The protein resides in the cytoplasm. The enzyme catalyses N(6)-dimethylallyladenosine(37) in tRNA + (sulfur carrier)-SH + AH2 + 2 S-adenosyl-L-methionine = 2-methylsulfanyl-N(6)-dimethylallyladenosine(37) in tRNA + (sulfur carrier)-H + 5'-deoxyadenosine + L-methionine + A + S-adenosyl-L-homocysteine + 2 H(+). Catalyzes the methylthiolation of N6-(dimethylallyl)adenosine (i(6)A), leading to the formation of 2-methylthio-N6-(dimethylallyl)adenosine (ms(2)i(6)A) at position 37 in tRNAs that read codons beginning with uridine. The protein is tRNA-2-methylthio-N(6)-dimethylallyladenosine synthase of Salmonella arizonae (strain ATCC BAA-731 / CDC346-86 / RSK2980).